Reading from the N-terminus, the 426-residue chain is Serine--tRNA ligase (426 aa).

233-235 (TAE) contacts L-serine. 264–266 (RSE) is a binding site for ATP. E287 contacts L-serine. Residue 351–354 (EISS) participates in ATP binding. L-serine is bound at residue S387.

The protein belongs to the class-II aminoacyl-tRNA synthetase family. Type-1 seryl-tRNA synthetase subfamily. Homodimer. The tRNA molecule binds across the dimer.

The protein localises to the cytoplasm. The enzyme catalyses tRNA(Ser) + L-serine + ATP = L-seryl-tRNA(Ser) + AMP + diphosphate + H(+). It carries out the reaction tRNA(Sec) + L-serine + ATP = L-seryl-tRNA(Sec) + AMP + diphosphate + H(+). The protein operates within aminoacyl-tRNA biosynthesis; selenocysteinyl-tRNA(Sec) biosynthesis; L-seryl-tRNA(Sec) from L-serine and tRNA(Sec): step 1/1. Catalyzes the attachment of serine to tRNA(Ser). Is also able to aminoacylate tRNA(Sec) with serine, to form the misacylated tRNA L-seryl-tRNA(Sec), which will be further converted into selenocysteinyl-tRNA(Sec). The sequence is that of Serine--tRNA ligase from Pseudomonas syringae pv. tomato (strain ATCC BAA-871 / DC3000).